We begin with the raw amino-acid sequence, 272 residues long: Shikimate dehydrogenase (NADP(+)) (272 aa).

Residues 14-16 and threonine 61 contribute to the shikimate site; that span reads SKS. Lysine 65 functions as the Proton acceptor in the catalytic mechanism. Residues asparagine 86 and aspartate 102 each coordinate shikimate. NADP(+)-binding positions include 126–130, 150–155, and methionine 214; these read GAGGA and NRTASK. Tyrosine 216 serves as a coordination point for shikimate. Glycine 239 is an NADP(+) binding site.

The protein belongs to the shikimate dehydrogenase family. Homodimer.

It catalyses the reaction shikimate + NADP(+) = 3-dehydroshikimate + NADPH + H(+). The protein operates within metabolic intermediate biosynthesis; chorismate biosynthesis; chorismate from D-erythrose 4-phosphate and phosphoenolpyruvate: step 4/7. Functionally, involved in the biosynthesis of the chorismate, which leads to the biosynthesis of aromatic amino acids. Catalyzes the reversible NADPH linked reduction of 3-dehydroshikimate (DHSA) to yield shikimate (SA). This chain is Shikimate dehydrogenase (NADP(+)), found in Pseudoalteromonas atlantica (strain T6c / ATCC BAA-1087).